We begin with the raw amino-acid sequence, 305 residues long: Probable xyloglucan endotransglucosylase/hydrolase protein 8 (305 aa).

The signal sequence occupies residues 1–31 (METERRIITSCSAMTALFLFMTALMASSSIA). A GH16 domain is found at 32–231 (ATPTQSFEDN…WKKAPFVSSY (200 aa)). N-linked (GlcNAc...) asparagine glycans are attached at residues Asn-61 and Asn-66. The Nucleophile role is filled by Glu-115. The active-site Proton donor is the Glu-119. Position 119 (Glu-119) interacts with xyloglucan. A glycan (N-linked (GlcNAc...) asparagine) is linked at Asn-123. 132 to 134 (QTN) contacts xyloglucan. The N-linked (GlcNAc...) asparagine glycan is linked to Asn-138. Xyloglucan contacts are provided by residues 142 to 144 (NRE), 210 to 211 (DW), and Gly-215. Cystine bridges form between Cys-239–Cys-248 and Cys-286–Cys-299. Arg-291 contributes to the xyloglucan binding site.

Belongs to the glycosyl hydrolase 16 family. XTH group 1 subfamily. Contains at least one intrachain disulfide bond essential for its enzymatic activity.

The protein resides in the secreted. It is found in the cell wall. It localises to the extracellular space. The protein localises to the apoplast. The catalysed reaction is breaks a beta-(1-&gt;4) bond in the backbone of a xyloglucan and transfers the xyloglucanyl segment on to O-4 of the non-reducing terminal glucose residue of an acceptor, which can be a xyloglucan or an oligosaccharide of xyloglucan.. In terms of biological role, catalyzes xyloglucan endohydrolysis (XEH) and/or endotransglycosylation (XET). Cleaves and religates xyloglucan polymers, an essential constituent of the primary cell wall, and thereby participates in cell wall construction of growing tissues. The chain is Probable xyloglucan endotransglucosylase/hydrolase protein 8 (XTH8) from Arabidopsis thaliana (Mouse-ear cress).